A 631-amino-acid polypeptide reads, in one-letter code: 1-deoxy-D-xylulose-5-phosphate synthase (631 aa).

Thiamine diphosphate is bound by residues His73 and 114–116; that span reads GHS. Asp145 contributes to the Mg(2+) binding site. Thiamine diphosphate-binding positions include 146–147, Asn174, Tyr285, and Glu366; that span reads GA. Position 174 (Asn174) interacts with Mg(2+).

Belongs to the transketolase family. DXPS subfamily. As to quaternary structure, homodimer. Mg(2+) is required as a cofactor. It depends on thiamine diphosphate as a cofactor.

It carries out the reaction D-glyceraldehyde 3-phosphate + pyruvate + H(+) = 1-deoxy-D-xylulose 5-phosphate + CO2. Its pathway is metabolic intermediate biosynthesis; 1-deoxy-D-xylulose 5-phosphate biosynthesis; 1-deoxy-D-xylulose 5-phosphate from D-glyceraldehyde 3-phosphate and pyruvate: step 1/1. Its function is as follows. Catalyzes the acyloin condensation reaction between C atoms 2 and 3 of pyruvate and glyceraldehyde 3-phosphate to yield 1-deoxy-D-xylulose-5-phosphate (DXP). The chain is 1-deoxy-D-xylulose-5-phosphate synthase from Desulfitobacterium hafniense (strain DSM 10664 / DCB-2).